Consider the following 482-residue polypeptide: tRNA sulfurtransferase (482 aa).

Residues 61-165 form the THUMP domain; sequence AAIVAELTRI…DERLILVTAR (105 aa). ATP contacts are provided by residues 183 to 184, Lys265, Gly287, and Gln296; that span reads LI. Residues Cys344 and Cys456 are joined by a disulfide bond. One can recognise a Rhodanese domain in the interval 404-482; it reads FSHNDVILDI…GFKNVKVYRP (79 aa). Cys456 (cysteine persulfide intermediate) is an active-site residue.

This sequence belongs to the ThiI family.

The protein localises to the cytoplasm. The enzyme catalyses [ThiI sulfur-carrier protein]-S-sulfanyl-L-cysteine + a uridine in tRNA + 2 reduced [2Fe-2S]-[ferredoxin] + ATP + H(+) = [ThiI sulfur-carrier protein]-L-cysteine + a 4-thiouridine in tRNA + 2 oxidized [2Fe-2S]-[ferredoxin] + AMP + diphosphate. The catalysed reaction is [ThiS sulfur-carrier protein]-C-terminal Gly-Gly-AMP + S-sulfanyl-L-cysteinyl-[cysteine desulfurase] + AH2 = [ThiS sulfur-carrier protein]-C-terminal-Gly-aminoethanethioate + L-cysteinyl-[cysteine desulfurase] + A + AMP + 2 H(+). It functions in the pathway cofactor biosynthesis; thiamine diphosphate biosynthesis. In terms of biological role, catalyzes the ATP-dependent transfer of a sulfur to tRNA to produce 4-thiouridine in position 8 of tRNAs, which functions as a near-UV photosensor. Also catalyzes the transfer of sulfur to the sulfur carrier protein ThiS, forming ThiS-thiocarboxylate. This is a step in the synthesis of thiazole, in the thiamine biosynthesis pathway. The sulfur is donated as persulfide by IscS. The chain is tRNA sulfurtransferase from Erwinia tasmaniensis (strain DSM 17950 / CFBP 7177 / CIP 109463 / NCPPB 4357 / Et1/99).